Consider the following 260-residue polypeptide: uncharacterized protein (260 aa).

A signal peptide spans M1 to S22. A lipid anchor (N-palmitoyl cysteine) is attached at C23. C23 carries the S-diacylglycerol cysteine lipid modification.

Belongs to the staphylococcal tandem lipoprotein family.

It localises to the cell membrane. This is an uncharacterized protein from Staphylococcus aureus (strain N315).